Here is a 280-residue protein sequence, read N- to C-terminus: Shikimate dehydrogenase (NADP(+)) (280 aa).

Shikimate is bound by residues 15–17 and Thr-62; that span reads SLS. Catalysis depends on Lys-66, which acts as the Proton acceptor. Positions 88 and 104 each coordinate shikimate. Residues 128–132, 151–156, and Ile-222 contribute to the NADP(+) site; these read GAGGA and NRTEGR. Tyr-224 contributes to the shikimate binding site. Position 245 (Gly-245) interacts with NADP(+).

The protein belongs to the shikimate dehydrogenase family. In terms of assembly, homodimer.

It carries out the reaction shikimate + NADP(+) = 3-dehydroshikimate + NADPH + H(+). It functions in the pathway metabolic intermediate biosynthesis; chorismate biosynthesis; chorismate from D-erythrose 4-phosphate and phosphoenolpyruvate: step 4/7. Functionally, involved in the biosynthesis of the chorismate, which leads to the biosynthesis of aromatic amino acids. Catalyzes the reversible NADPH linked reduction of 3-dehydroshikimate (DHSA) to yield shikimate (SA). This chain is Shikimate dehydrogenase (NADP(+)), found in Methanosarcina barkeri (strain Fusaro / DSM 804).